Here is a 337-residue protein sequence, read N- to C-terminus: MHSPPALGKVNMSQLQDNFGRRFHYLRLSITDACNFKCTYCLPDGYQSQGNSPFLSLSEIELLLGAFSQMGTQKVRITGGEPSLRKDFIDIIGLAANTPNIKTVATTTNGYRLAKNAQAWYDAGLRRINVSIDSLDPKMFYQITGENRFDQVMRGVDAALESGFERVKINAVLLKGLNSQDLPRFLHWIKHMPVDLRFIELMETGLGREYFKAHHLAGTQVKQQLIRDGWQLDKADILDGPAQNFSHSDYQGRIGLIMPYEKNFCVSCNRLRVSAKGQLHLCLFTENGVNLKDLLQDKSQTPELMARLQQQLGFKTAAHSLHQGITGVTTHLASIGG.

A Radical SAM core domain is found at 18 to 242 (NFGRRFHYLR…DKADILDGPA (225 aa)). GTP is bound at residue Arg27. [4Fe-4S] cluster-binding residues include Cys34 and Cys38. Tyr40 contacts S-adenosyl-L-methionine. Cys41 is a binding site for [4Fe-4S] cluster. Arg76 is a GTP binding site. Gly80 contacts S-adenosyl-L-methionine. Thr107 is a binding site for GTP. Ser131 lines the S-adenosyl-L-methionine pocket. Lys168 is a GTP binding site. Position 202 (Met202) interacts with S-adenosyl-L-methionine. The [4Fe-4S] cluster site is built by Cys265 and Cys268. 270–272 (RLR) provides a ligand contact to GTP. A [4Fe-4S] cluster-binding site is contributed by Cys282.

It belongs to the radical SAM superfamily. MoaA family. In terms of assembly, monomer and homodimer. [4Fe-4S] cluster is required as a cofactor.

The catalysed reaction is GTP + AH2 + S-adenosyl-L-methionine = (8S)-3',8-cyclo-7,8-dihydroguanosine 5'-triphosphate + 5'-deoxyadenosine + L-methionine + A + H(+). Its pathway is cofactor biosynthesis; molybdopterin biosynthesis. Catalyzes the cyclization of GTP to (8S)-3',8-cyclo-7,8-dihydroguanosine 5'-triphosphate. This Shewanella denitrificans (strain OS217 / ATCC BAA-1090 / DSM 15013) protein is GTP 3',8-cyclase.